The primary structure comprises 264 residues: 3-methyl-2-oxobutanoate hydroxymethyltransferase (264 aa).

Aspartate 45 and aspartate 84 together coordinate Mg(2+). 3-methyl-2-oxobutanoate-binding positions include 45 to 46 (DS), aspartate 84, and lysine 112. Mg(2+) is bound at residue glutamate 114. Glutamate 181 serves as the catalytic Proton acceptor.

It belongs to the PanB family. As to quaternary structure, homodecamer; pentamer of dimers. Mg(2+) serves as cofactor.

It localises to the cytoplasm. It carries out the reaction 3-methyl-2-oxobutanoate + (6R)-5,10-methylene-5,6,7,8-tetrahydrofolate + H2O = 2-dehydropantoate + (6S)-5,6,7,8-tetrahydrofolate. The protein operates within cofactor biosynthesis; (R)-pantothenate biosynthesis; (R)-pantoate from 3-methyl-2-oxobutanoate: step 1/2. In terms of biological role, catalyzes the reversible reaction in which hydroxymethyl group from 5,10-methylenetetrahydrofolate is transferred onto alpha-ketoisovalerate to form ketopantoate. The protein is 3-methyl-2-oxobutanoate hydroxymethyltransferase of Aliivibrio fischeri (strain MJ11) (Vibrio fischeri).